The sequence spans 458 residues: MIDYMEHVLRSFEQCTGWNRDNSYENVTATSENLLSFRVPSGVKFQVSNKSTPNTFTTFELSNNKVINGSLAYLYTNCQGLENYVSNSRDILLQEASETYRQIRPLYPCHSLRSSSDGAKEFGPSSLWYGRMYYPTSTLEAMVVSRSSAQTQFVAKCISSLANASVLTLYWQKDSGQNCQEWVASTNEGLLGYRILHNFVGSQSKLNTSLYNDSSLSVGGELWFGVLNTTPACSTTLRYCTHSANTGKPLTLTLSWNPLFGHVSSTYSVKTSSGATFSSKYDFNLYSIESNLSFGCDLWRRGHTKQLDQRRTEPLDAPNTNSSVFSKERVQKKQGPKEDSPMFYHLMAGSTSSQKLIEDLNVTFASSLQKLTKEKSTIQRFENSLIDANFASVWKLSTSLRHKNLRVLWEGKYKGFLISAGAEFTGAPLELPSNLAGESKTPALIRPGKFGIQLQYST.

Positions 307-339 (LDQRRTEPLDAPNTNSSVFSKERVQKKQGPKED) are disordered. Residues 326 to 339 (SKERVQKKQGPKED) are compositionally biased toward basic and acidic residues.

This sequence belongs to the MDM10 family. As to quaternary structure, component of the ER-mitochondria encounter structure (ERMES) or MDM complex, composed of MMM1, MDM10, MDM12 and MDM34. Associates with the mitochondrial outer membrane sorting assembly machinery SAM(core) complex.

It localises to the mitochondrion outer membrane. Component of the ERMES/MDM complex, which serves as a molecular tether to connect the endoplasmic reticulum and mitochondria. Components of this complex are involved in the control of mitochondrial shape and protein biogenesis and may function in phospholipid exchange. MDM10 is involved in the late assembly steps of the general translocase of the mitochondrial outer membrane (TOM complex). Functions in the TOM40-specific route of the assembly of outer membrane beta-barrel proteins, including the association of TOM40 with the receptor TOM22 and small TOM proteins. Can associate with the SAM(core) complex as well as the MDM12-MMM1 complex, both involved in late steps of the major beta-barrel assembly pathway, that is responsible for biogenesis of all outer membrane beta-barrel proteins. May act as a switch that shuttles between both complexes and channels precursor proteins into the TOM40-specific pathway. Plays a role in mitochondrial morphology and in the inheritance of mitochondria. This chain is Mitochondrial distribution and morphology protein 10, found in Lachancea thermotolerans (strain ATCC 56472 / CBS 6340 / NRRL Y-8284) (Yeast).